The chain runs to 152 residues: Lipoprotein signal peptidase (152 aa).

2 consecutive transmembrane segments (helical) span residues 55–75 (NKMW…VFYM) and 85–105 (LGIS…DRVF). Active-site residues include D111 and D129. Residues 124–144 (VFNIADSALCIGVVLIIIQTV) traverse the membrane as a helical segment.

It belongs to the peptidase A8 family.

The protein localises to the cell membrane. The catalysed reaction is Release of signal peptides from bacterial membrane prolipoproteins. Hydrolyzes -Xaa-Yaa-Zaa-|-(S,diacylglyceryl)Cys-, in which Xaa is hydrophobic (preferably Leu), and Yaa (Ala or Ser) and Zaa (Gly or Ala) have small, neutral side chains.. The protein operates within protein modification; lipoprotein biosynthesis (signal peptide cleavage). This protein specifically catalyzes the removal of signal peptides from prolipoproteins. The chain is Lipoprotein signal peptidase from Bacillus mycoides (strain KBAB4) (Bacillus weihenstephanensis).